Reading from the N-terminus, the 2167-residue chain is Myosin-VIIa (2167 aa).

The 671-residue stretch at 63-733 (QGVEDMISLG…HDLFLEQERD (671 aa)) folds into the Myosin motor domain. Position 156–163 (156–163 (GESGAGKT)) interacts with ATP. Actin-binding stretches follow at residues 612–634 (LDAL…KPNE) and 712–726 (QLGH…AHDL). IQ domains follow at residues 736–758 (LTRK…RFLR), 759–788 (LRAA…GYMR), 805–827 (LRGH…EYGH), and 828–857 (KMWA…EHKQ). Positions 886-919 (QHYRDRLHELERREIQEQLENRRRVEVNMNIIND) form a coiled coil. Residues 1008–1245 (YAKKALKHPL…PSWLELQATK (238 aa)) form the MyTH4 1 domain. The region spanning 1250 to 1560 (IMLPITFMDG…YFLDGLKKRS (311 aa)) is the FERM 1 domain. The SH3 domain maps to 1558-1627 (KRSKYVIALQ…PAETVYVLPT (70 aa)). Phosphoserine is present on residues S1651 and S1654. The 149-residue stretch at 1701-1849 (YSRDPIKAPL…PHQVEVEAIQ (149 aa)) folds into the MyTH4 2 domain. The 304-residue stretch at 1855 to 2158 (IFHKVYFPDD…SYISLMLTNM (304 aa)) folds into the FERM 2 domain. T2045 carries the post-translational modification Phosphothreonine.

The protein belongs to the TRAFAC class myosin-kinesin ATPase superfamily. Myosin family. In terms of assembly, homodimerizes in a two headed molecule through the formation of a coiled-coil rod. Homodimers motility is approximately 8-10 times slower than that of myosin V, and its step size is 30 nm, which is consistent with the presence of five IQ motifs in its neck region. Interacts with Cad99C (via the cytoplasmic domain). Interacts with zip and Sans. In terms of tissue distribution, expressed in the setae, micro- and macrochaetae on the head, thorax and wing.

The protein localises to the cytoplasm. It localises to the cell cortex. It is found in the cell projection. Its subcellular location is the microvillus. Myosins are actin-based motor molecules with ATPase activity. Unconventional myosins serve in intracellular movements: can function in cells as a single-molecule cargo transporter. A very slow and high-duty-ratio motor, may be suitable for tension maintenance of actin filaments. Their highly divergent tails are presumed to bind to membranous compartments, which would be moved relative to actin filaments. Plays a key role in the formation of cellular projections and other actin-based functions required for embryonic and larval viability. Necessary for auditory transduction: plays a role in Johnston's organ organization by functioning in scolopidial apical attachment and therefore to acoustic stimulus propagation from the antenna a2/a3 joint to transducing elements. Interaction with the myosin zip may be important for its function in scolopidial apical attachment. During oogenesis it has Cad99c-dependent and Cad99c-independent roles in regulating the shape and spacing of the follicle cell microvilli which secrete eggshell material such as the vitelline membrane. May be required for the normal expression of Cad99c in the follicle cell microvilli. In Drosophila melanogaster (Fruit fly), this protein is Myosin-VIIa.